Consider the following 224-residue polypeptide: Rhodanese-like domain-containing protein 14, chloroplastic (224 aa).

A chloroplast-targeting transit peptide spans 1 to 48 (MASLTSIATPYPSSSQALRLKSSGNTLFSAGVRSAAMVSGHKTLKIQC). The Rhodanese domain maps to 87–220 (KENNFVILDV…WGKEGLPVET (134 aa)). C166 acts as the Cysteine persulfide intermediate in catalysis.

It localises to the plastid. Its subcellular location is the chloroplast. The chain is Rhodanese-like domain-containing protein 14, chloroplastic from Arabidopsis thaliana (Mouse-ear cress).